The chain runs to 832 residues: Valine--tRNA ligase (832 aa).

Positions 41 to 51 (PNVTGKLHLGH) match the 'HIGH' region motif. The short motif at 512-516 (KMSKS) is the 'KMSKS' region element. K515 lines the ATP pocket. A coiled-coil region spans residues 760–831 (FIEISQEQKQ…QIYLEELKWK (72 aa)).

The protein belongs to the class-I aminoacyl-tRNA synthetase family. ValS type 1 subfamily. In terms of assembly, monomer.

The protein resides in the cytoplasm. The enzyme catalyses tRNA(Val) + L-valine + ATP = L-valyl-tRNA(Val) + AMP + diphosphate. In terms of biological role, catalyzes the attachment of valine to tRNA(Val). As ValRS can inadvertently accommodate and process structurally similar amino acids such as threonine, to avoid such errors, it has a 'posttransfer' editing activity that hydrolyzes mischarged Thr-tRNA(Val) in a tRNA-dependent manner. This chain is Valine--tRNA ligase, found in Mycoplasmopsis synoviae (strain 53) (Mycoplasma synoviae).